A 149-amino-acid polypeptide reads, in one-letter code: Cytochrome c-556 (149 aa).

Positions 1-20 (MLRTVIVAGALVLTASAVMA) are cleaved as a signal peptide. 4 residues coordinate heme c: M32, C137, C140, and H141.

As to quaternary structure, monomer. Binds 1 heme c group covalently per subunit.

Its function is as follows. Low-spin monoheme cytochrome c. This chain is Cytochrome c-556, found in Rhodopseudomonas palustris (strain ATCC BAA-98 / CGA009).